Reading from the N-terminus, the 216-residue chain is MASLSSNLKTLMTSVHINASELARRTGIAQPIIHRLSTGQNTNPKLATIKPIARYFMVNISQLIGEEPLPSDQSPQITGNYRAWNRVPLISWKDATSWPEALPHYQTSDEVMYISTDANVSKLAYGLIIQGCAMEPLFPNGTTIIVEPERKPKDRDFVVVRLQGEPEARLRQIITEGNDRYLKSLNPELEKLEVARLAQEDQFLGVMAQAKVDFLR.

Positions 8–63 constitute an HTH cro/C1-type domain; that stretch reads LKTLMTSVHINASELARRTGIAQPIIHRLSTGQNTNPKLATIKPIARYFMVNISQL. Residues 19–38 constitute a DNA-binding region (H-T-H motif); sequence ASELARRTGIAQPIIHRLST.

This is an uncharacterized protein from Coxiella burnetii (strain RSA 493 / Nine Mile phase I).